Here is a 689-residue protein sequence, read N- to C-terminus: Probable E3 ubiquitin ligase complex SCF subunit sconB (689 aa).

Composition is skewed to basic and acidic residues over residues 1-12 (MDAHELSFRDGH) and 19-29 (MKDECASEEKA). The segment at 1–66 (MDAHELSFRD…STQDKPHSFN (66 aa)) is disordered. The F-box domain occupies 186–232 (IDFLTALPPEISFKILCYLDTTSLCKAAQVSRRWRALADDDVVWHRM). The tract at residues 267-306 (AATWDVSEQPAETESNSATIDTAASGSKRKPESDKEDTAM) is disordered. Residues 276 to 291 (PAETESNSATIDTAAS) show a composition bias toward polar residues. Basic and acidic residues predominate over residues 295 to 306 (RKPESDKEDTAM). WD repeat units follow at residues 358–395 (GHSN…ELRT), 398–437 (GHRS…STYS), 439–475 (HRGG…TCLL), 477–518 (GHTD…RTFH), 572–615 (DTPS…CLRT), 616–655 (FFGH…CERT), and 658–689 (GHSG…SFQT).

Belongs to the WD repeat MET30/SCONB/SCON-2 family. In terms of assembly, component of the SCF(sconB) E3 ubiquitin ligase complex.

The protein operates within protein modification; protein ubiquitination. Functionally, component of the SCF(sconB) E3 ubiquitin ligase complex involved in the regulation of sulfur metabolite repression, probably by mediating the inactivation or degradation of the metR transcription factor. The protein is Probable E3 ubiquitin ligase complex SCF subunit sconB (sconB) of Neosartorya fischeri (strain ATCC 1020 / DSM 3700 / CBS 544.65 / FGSC A1164 / JCM 1740 / NRRL 181 / WB 181) (Aspergillus fischerianus).